Reading from the N-terminus, the 482-residue chain is MKFIIKLFPEITIKSQSVRLRFIKILTGNIRNVLKHYDETLAVVRHWDNIEVRAKDESQRLAIRDALTRIPGIHHILEVEDVPFTDMHDIFEKALVQYRDQLEGKTFCVRVKRRGKHDFSSIDVERYVGGGLNQHIESARVKLTNPDVTVHLEVEDDRLLLIKGRYEGIGGFPIGTQEDVLSLISGGFDSGVSSYMLMRRGCRVHYCFFNLGGAAHEIGVRQVAHYLWNRFGSSHRVRFVAINFEPVVGEILEKIDDGQMGVILKRMMVRAASKVAERYGVQALVTGEALGQVSSQTLTNLRLIDNVSDTLILRPLISYDKEHIINLARQIGTEDFARTMPEYCGVISKSPTVKAVKSKIEAEEEKFDFSILDKVVEEANNVDIREIAQQTEQEVVEVETVNGFGPNDVILDIRSVDEQEDKPLRVEGIDVVSLPFYKLSTKFGDLDQNKTWLLWCERGVMSRLQALYLREQGFNNVKVYRP.

Residues 61–165 enclose the THUMP domain; that stretch reads LAIRDALTRI…DDRLLLIKGR (105 aa). Residues 183-184, lysine 265, glycine 287, and glutamine 296 each bind ATP; that span reads LI. The cysteines at positions 344 and 456 are disulfide-linked. In terms of domain architecture, Rhodanese spans 404-482; that stretch reads FGPNDVILDI…GFNNVKVYRP (79 aa). The active-site Cysteine persulfide intermediate is cysteine 456.

It belongs to the ThiI family.

It localises to the cytoplasm. The enzyme catalyses [ThiI sulfur-carrier protein]-S-sulfanyl-L-cysteine + a uridine in tRNA + 2 reduced [2Fe-2S]-[ferredoxin] + ATP + H(+) = [ThiI sulfur-carrier protein]-L-cysteine + a 4-thiouridine in tRNA + 2 oxidized [2Fe-2S]-[ferredoxin] + AMP + diphosphate. It carries out the reaction [ThiS sulfur-carrier protein]-C-terminal Gly-Gly-AMP + S-sulfanyl-L-cysteinyl-[cysteine desulfurase] + AH2 = [ThiS sulfur-carrier protein]-C-terminal-Gly-aminoethanethioate + L-cysteinyl-[cysteine desulfurase] + A + AMP + 2 H(+). It functions in the pathway cofactor biosynthesis; thiamine diphosphate biosynthesis. Functionally, catalyzes the ATP-dependent transfer of a sulfur to tRNA to produce 4-thiouridine in position 8 of tRNAs, which functions as a near-UV photosensor. Also catalyzes the transfer of sulfur to the sulfur carrier protein ThiS, forming ThiS-thiocarboxylate. This is a step in the synthesis of thiazole, in the thiamine biosynthesis pathway. The sulfur is donated as persulfide by IscS. This chain is tRNA sulfurtransferase, found in Escherichia fergusonii (strain ATCC 35469 / DSM 13698 / CCUG 18766 / IAM 14443 / JCM 21226 / LMG 7866 / NBRC 102419 / NCTC 12128 / CDC 0568-73).